Reading from the N-terminus, the 442-residue chain is NALCN channel auxiliary factor 2 (442 aa).

Residues 42–62 traverse the membrane as a helical segment; the sequence is LASLLFFTVLLSNHLWLVSAG. N-linked (GlcNAc...) asparagine glycosylation is found at N77, N100, N171, N279, and N354. Residues 406 to 426 traverse the membrane as a helical segment; it reads CVLVLMLLHTMASFSVVQNGV.

This sequence belongs to the NALF family.

It is found in the membrane. Functionally, probable component of the NALCN channel complex, a channel that regulates the resting membrane potential and controls neuronal excitability. The polypeptide is NALCN channel auxiliary factor 2 (nalf2) (Xenopus tropicalis (Western clawed frog)).